Consider the following 230-residue polypeptide: Sugar fermentation stimulation protein homolog (230 aa).

Belongs to the SfsA family.

The sequence is that of Sugar fermentation stimulation protein homolog from Clostridium botulinum (strain ATCC 19397 / Type A).